A 360-amino-acid chain; its full sequence is Photosystem II protein D1 1 (360 aa).

3 consecutive transmembrane segments (helical) span residues 29–46, 118–133, and 142–156; these read YVGW…SATI, HFLI…EWEL, and WICI…AAAA. H118 is a binding site for chlorophyll a. Y126 contacts pheophytin a. [CaMn4O5] cluster-binding residues include D170 and E189. The helical transmembrane segment at 197–218 threads the bilayer; it reads FHMLGVAGVFGGSLFSAMHGSL. H198 contributes to the chlorophyll a binding site. A quinone contacts are provided by residues H215 and 264 to 265; that span reads SF. A Fe cation-binding site is contributed by H215. H272 provides a ligand contact to Fe cation. A helical membrane pass occupies residues 274–288; the sequence is FLAAWPVIGIWFTAL. Residues H332, E333, D342, and A344 each contribute to the [CaMn4O5] cluster site. The propeptide occupies 345–360; sequence GTESAPVAVGNADLNG.

It belongs to the reaction center PufL/M/PsbA/D family. In terms of assembly, PSII is composed of 1 copy each of membrane proteins PsbA, PsbB, PsbC, PsbD, PsbE, PsbF, PsbH, PsbI, PsbJ, PsbK, PsbL, PsbM, PsbT, PsbX, Psb30/Ycf12, peripheral proteins PsbO, CyanoQ (PsbQ), PsbU, PsbV and a large number of cofactors. It forms dimeric complexes. Requires The D1/D2 heterodimer binds P680, chlorophylls that are the primary electron donor of PSII, and subsequent electron acceptors. It shares a non-heme iron and each subunit binds pheophytin, quinone, additional chlorophylls, carotenoids and lipids. D1 provides most of the ligands for the Mn4-Ca-O5 cluster of the oxygen-evolving complex (OEC). There is also a Cl(-1) ion associated with D1 and D2, which is required for oxygen evolution. The PSII complex binds additional chlorophylls, carotenoids and specific lipids. as cofactor. Post-translationally, tyr-161 forms a radical intermediate that is referred to as redox-active TyrZ, YZ or Y-Z. In terms of processing, C-terminally processed by CtpA; processing is essential to allow assembly of the oxygen-evolving complex and thus photosynthetic growth.

The protein resides in the cell inner membrane. The catalysed reaction is 2 a plastoquinone + 4 hnu + 2 H2O = 2 a plastoquinol + O2. Photosystem II (PSII) is a light-driven water:plastoquinone oxidoreductase that uses light energy to abstract electrons from H(2)O, generating O(2) and a proton gradient subsequently used for ATP formation. It consists of a core antenna complex that captures photons, and an electron transfer chain that converts photonic excitation into a charge separation. The D1/D2 (PsbA/PsbD) reaction center heterodimer binds P680, the primary electron donor of PSII as well as several subsequent electron acceptors. The chain is Photosystem II protein D1 1 from Gloeobacter violaceus (strain ATCC 29082 / PCC 7421).